The primary structure comprises 123 residues: Small ribosomal subunit protein uS12cz/uS12cy (123 aa).

It belongs to the universal ribosomal protein uS12 family. As to quaternary structure, part of the 30S ribosomal subunit.

The protein localises to the plastid. It localises to the chloroplast. Its function is as follows. With S4 and S5 plays an important role in translational accuracy. Located at the interface of the 30S and 50S subunits. This Daucus carota (Wild carrot) protein is Small ribosomal subunit protein uS12cz/uS12cy (rps12-A).